Reading from the N-terminus, the 35-residue chain is Purotoxin-1 (35 aa).

4 disulfide bridges follow: Cys3–Cys16, Cys10–Cys21, Cys15–Cys32, and Cys23–Cys30.

Belongs to the neurotoxin 33 family. As to expression, expressed by the venom gland.

Its subcellular location is the secreted. Inhibits P2RX3 receptors. Has an analgesic effect in rat. Enhances the high-affinity desensitization of P2RX3 purinoceptors. At 50 nM, decreases the IC(50) for ambient ATP from 46.5 nM to 12.7 nM in mouse P2RX3. The chain is Purotoxin-1 from Alopecosa marikovskyi (Wolf spider).